The chain runs to 267 residues: uncharacterized protein (267 aa).

In terms of domain architecture, ABC transporter spans 17 to 248 (LKVENLTKIF…PRDRTSIEFL (232 aa)). ATP is bound at residue 53–60 (GPSGCGKT).

This sequence belongs to the ABC transporter superfamily.

This is an uncharacterized protein from Methanocaldococcus jannaschii (strain ATCC 43067 / DSM 2661 / JAL-1 / JCM 10045 / NBRC 100440) (Methanococcus jannaschii).